A 462-amino-acid polypeptide reads, in one-letter code: tRNA modification GTPase MnmE (462 aa).

Residues Arg27, Glu89, and Arg128 each contribute to the (6S)-5-formyl-5,6,7,8-tetrahydrofolate site. A TrmE-type G domain is found at 223–383 (GLKIAIVGRP…LEAAILAAVG (161 aa)). Residues 233-238 (NVGKSS), 252-258 (TDLPGRT), and 277-280 (DTAG) each bind GTP. Ser237 and Thr258 together coordinate Mg(2+). A (6S)-5-formyl-5,6,7,8-tetrahydrofolate-binding site is contributed by Lys462.

This sequence belongs to the TRAFAC class TrmE-Era-EngA-EngB-Septin-like GTPase superfamily. TrmE GTPase family. In terms of assembly, homodimer. Heterotetramer of two MnmE and two MnmG subunits. The cofactor is K(+).

It is found in the cytoplasm. Exhibits a very high intrinsic GTPase hydrolysis rate. Involved in the addition of a carboxymethylaminomethyl (cmnm) group at the wobble position (U34) of certain tRNAs, forming tRNA-cmnm(5)s(2)U34. The polypeptide is tRNA modification GTPase MnmE (Synechococcus sp. (strain ATCC 27144 / PCC 6301 / SAUG 1402/1) (Anacystis nidulans)).